A 172-amino-acid chain; its full sequence is MGRRLGRVAALLLGLLVECTEAKKHCWYFEGLYPTYYICRSYEDCCGSRCCVRALSIQRLWYFWFLLMMGVLFCCGAGFFIRRRMYPPPLIEEPTFNVSYTRQPPNPAPGAQQMGPPYYTDPGGPGMNPVGNTMAMAFQVQPNSPHGGTTYPPPPSYCNTPPPPYEQVVKDK.

An N-terminal signal peptide occupies residues 1-22; sequence MGRRLGRVAALLLGLLVECTEA. The Extracellular portion of the chain corresponds to 23–60; the sequence is KKHCWYFEGLYPTYYICRSYEDCCGSRCCVRALSIQRL. The helical transmembrane segment at 61-81 threads the bilayer; that stretch reads WYFWFLLMMGVLFCCGAGFFI. The Cytoplasmic segment spans residues 82 to 172; sequence RRRMYPPPLI…PPYEQVVKDK (91 aa). The interval 139 to 172 is disordered; the sequence is QVQPNSPHGGTTYPPPPSYCNTPPPPYEQVVKDK. Over residues 151–165 the composition is skewed to pro residues; it reads YPPPPSYCNTPPPPY.

The protein belongs to the VOPP1/ECOP family. As to quaternary structure, interacts with WWOX (via WW domain).

It localises to the cytoplasmic vesicle membrane. The protein localises to the late endosome membrane. The protein resides in the lysosome membrane. Increases the transcriptional activity of NFKB1 by facilitating its nuclear translocation, DNA-binding and associated apoptotic response, when overexpressed. May sequester WWOX in lysosomal vesicles and thereby regulate WWOX role as tumor suppressor. The polypeptide is WW domain binding protein VOPP1 (Vopp1) (Mus musculus (Mouse)).